A 585-amino-acid chain; its full sequence is Arginine--tRNA ligase (585 aa).

Positions 131–141 (ANPTGPMHVGH) match the 'HIGH' region motif.

The protein belongs to the class-I aminoacyl-tRNA synthetase family. As to quaternary structure, monomer.

The protein localises to the cytoplasm. The enzyme catalyses tRNA(Arg) + L-arginine + ATP = L-arginyl-tRNA(Arg) + AMP + diphosphate. This Rhizobium leguminosarum bv. trifolii (strain WSM2304) protein is Arginine--tRNA ligase.